The sequence spans 23 residues: Defensin-like protein 2 (23 aa).

Q1 bears the Pyrrolidone carboxylic acid mark.

This sequence belongs to the DEFL family. Forms oligomers in its native state.

Functionally, possesses antifungal activity sensitive to inorganic cations. The sequence is that of Defensin-like protein 2 from Brassica napus (Rape).